We begin with the raw amino-acid sequence, 400 residues long: D-alanyl-D-alanine carboxypeptidase DacC (400 aa).

The signal sequence occupies residues 1 to 27; it reads MTQYSSLLRGLAAGSAFLFLFAPTAFA. S66 (acyl-ester intermediate) is an active-site residue. The active-site Proton acceptor is the K69. S132 is a catalytic residue. Position 235 (K235) interacts with substrate. The required for inner membrane binding stretch occupies residues 383 to 400; the sequence is VWDFVMMKFHQWFGSWFS.

The protein belongs to the peptidase S11 family.

It is found in the cell inner membrane. It carries out the reaction Preferential cleavage: (Ac)2-L-Lys-D-Ala-|-D-Ala. Also transpeptidation of peptidyl-alanyl moieties that are N-acyl substituents of D-alanine.. It participates in cell wall biogenesis; peptidoglycan biosynthesis. In terms of biological role, removes C-terminal D-alanyl residues from sugar-peptide cell wall precursors. In Escherichia coli (strain K12), this protein is D-alanyl-D-alanine carboxypeptidase DacC (dacC).